The chain runs to 137 residues: Active regulator of SIRT1 (137 aa).

Arginine 7 is modified (citrulline). A compositionally biased stretch (low complexity) spans 14–24; it reads GAPEAPGAAPG. The segment at 14-58 is disordered; that stretch reads GAPEAPGAAPGHTKPSQAPMKRTRKAKATQAQKLRNSAKGKVPKS. Serine 84 is modified (phosphoserine). A disordered region spans residues 96-120; sequence RQNRGRKACDRPVTKTKKKKKAEGT.

Belongs to the AROS family. In terms of assembly, part of the small subunit (SSU) processome, composed of more than 70 proteins and the RNA chaperone small nucleolar RNA (snoRNA) U3. Interacts with RPS19; the interaction is direct and mediates the integration of RPS19 in state post-A1. Interacts with SIRT1. Post-translationally, citrullinated by PADI4.

It localises to the nucleus. It is found in the nucleolus. Its function is as follows. Part of the small subunit (SSU) processome, first precursor of the small eukaryotic ribosomal subunit. During the assembly of the SSU processome in the nucleolus, many ribosome biogenesis factors, an RNA chaperone and ribosomal proteins associate with the nascent pre-rRNA and work in concert to generate RNA folding, modifications, rearrangements and cleavage as well as targeted degradation of pre-ribosomal RNA by the RNA exosome. Acts as a chaperone that specifically mediates the integration of RPS19 in state post-A1. Direct regulator of SIRT1. Enhances SIRT1-mediated deacetylation of p53/TP53, thereby participating in inhibition of p53/TP53-mediated transcriptional activity. In Bos taurus (Bovine), this protein is Active regulator of SIRT1 (RPS19BP1).